Reading from the N-terminus, the 174-residue chain is Small heat shock protein OV25-1 (174 aa).

One can recognise a sHSP domain in the interval 50–161; it reads LNECNIGNTL…ASRNIPIRAS (112 aa). The disordered stretch occupies residues 153–174; the sequence is SRNIPIRASPKEPEAKQKTKKQ. A compositionally biased stretch (basic and acidic residues) spans 161–174; sequence SPKEPEAKQKTKKQ.

Belongs to the small heat shock protein (HSP20) family.

The chain is Small heat shock protein OV25-1 (OV25-1) from Onchocerca volvulus.